The chain runs to 161 residues: Ribonuclease H (161 aa).

Positions 5-149 (EKLAIAAATD…VDAIAVAFSK (145 aa)) constitute an RNase H type-1 domain. Positions 14, 53, 78, and 141 each coordinate Mg(2+).

It belongs to the RNase H family. In terms of assembly, monomer. Mg(2+) serves as cofactor.

It is found in the cytoplasm. It carries out the reaction Endonucleolytic cleavage to 5'-phosphomonoester.. In terms of biological role, endonuclease that specifically degrades the RNA of RNA-DNA hybrids. This chain is Ribonuclease H, found in Prochlorococcus marinus (strain NATL2A).